Reading from the N-terminus, the 493-residue chain is Alpha-amylase-related protein (493 aa).

Residues M1 to A19 form the signal peptide. Q20 is modified (pyrrolidone carboxylic acid). A disulfide bridge connects residues C47 and C103. Ca(2+)-binding residues include N117, Q168, and D177. A disulfide bridge connects residues C156 and C170. Residue R205 participates in chloride binding. Residue D207 is the Nucleophile of the active site. Position 211 (H211) interacts with Ca(2+). The active-site Proton donor is E244. Positions 307 and 342 each coordinate chloride. 3 cysteine pairs are disulfide-bonded: C375/C381, C417/C440, and C447/C459.

Belongs to the glycosyl hydrolase 13 family. In terms of assembly, monomer. It depends on Ca(2+) as a cofactor. Requires chloride as cofactor.

Its subcellular location is the secreted. It carries out the reaction Endohydrolysis of (1-&gt;4)-alpha-D-glucosidic linkages in polysaccharides containing three or more (1-&gt;4)-alpha-linked D-glucose units.. The chain is Alpha-amylase-related protein (Amyrel) from Drosophila orena (Fruit fly).